A 229-amino-acid chain; its full sequence is Putative N-acetylmannosamine-6-phosphate 2-epimerase 2 (229 aa).

It belongs to the NanE family.

The catalysed reaction is an N-acyl-D-glucosamine 6-phosphate = an N-acyl-D-mannosamine 6-phosphate. Its pathway is amino-sugar metabolism; N-acetylneuraminate degradation; D-fructose 6-phosphate from N-acetylneuraminate: step 3/5. Functionally, converts N-acetylmannosamine-6-phosphate (ManNAc-6-P) to N-acetylglucosamine-6-phosphate (GlcNAc-6-P). In Salmonella paratyphi A (strain ATCC 9150 / SARB42), this protein is Putative N-acetylmannosamine-6-phosphate 2-epimerase 2.